Consider the following 316-residue polypeptide: Pantothenate kinase (316 aa).

95–102 lines the ATP pocket; that stretch reads GSVAVGKS.

It belongs to the prokaryotic pantothenate kinase family.

The protein localises to the cytoplasm. It catalyses the reaction (R)-pantothenate + ATP = (R)-4'-phosphopantothenate + ADP + H(+). It participates in cofactor biosynthesis; coenzyme A biosynthesis; CoA from (R)-pantothenate: step 1/5. This chain is Pantothenate kinase, found in Shewanella putrefaciens (strain CN-32 / ATCC BAA-453).